A 325-amino-acid chain; its full sequence is ATP phosphoribosyltransferase (325 aa).

Belongs to the ATP phosphoribosyltransferase family. Long subfamily. The cofactor is Mg(2+).

It is found in the cytoplasm. It carries out the reaction 1-(5-phospho-beta-D-ribosyl)-ATP + diphosphate = 5-phospho-alpha-D-ribose 1-diphosphate + ATP. The protein operates within amino-acid biosynthesis; L-histidine biosynthesis; L-histidine from 5-phospho-alpha-D-ribose 1-diphosphate: step 1/9. Feedback inhibited by histidine. In terms of biological role, catalyzes the condensation of ATP and 5-phosphoribose 1-diphosphate to form N'-(5'-phosphoribosyl)-ATP (PR-ATP). Has a crucial role in the pathway because the rate of histidine biosynthesis seems to be controlled primarily by regulation of HisG enzymatic activity. The sequence is that of ATP phosphoribosyltransferase from Rhodopseudomonas palustris (strain BisA53).